Here is a 160-residue protein sequence, read N- to C-terminus: Cytochrome b6-f complex subunit 4 (160 aa).

3 helical membrane passes run 36–56, 95–115, and 131–151; these read LLYM…GLAV, LLGV…PFIE, and TVFL…TLPI.

The protein belongs to the cytochrome b family. PetD subfamily. In terms of assembly, the 4 large subunits of the cytochrome b6-f complex are cytochrome b6, subunit IV (17 kDa polypeptide, petD), cytochrome f and the Rieske protein, while the 4 small subunits are petG, petL, petM and petN. The complex functions as a dimer.

It is found in the plastid. Its subcellular location is the chloroplast thylakoid membrane. Component of the cytochrome b6-f complex, which mediates electron transfer between photosystem II (PSII) and photosystem I (PSI), cyclic electron flow around PSI, and state transitions. This chain is Cytochrome b6-f complex subunit 4, found in Coleochaete orbicularis (Charophycean green alga).